The chain runs to 237 residues: Endonuclease V (237 aa).

Residues Asp46 and Asp114 each coordinate Mg(2+).

This sequence belongs to the endonuclease V family. Requires Mg(2+) as cofactor.

The protein localises to the cytoplasm. The enzyme catalyses Endonucleolytic cleavage at apurinic or apyrimidinic sites to products with a 5'-phosphate.. Functionally, DNA repair enzyme involved in the repair of deaminated bases. Selectively cleaves double-stranded DNA at the second phosphodiester bond 3' to a deoxyinosine leaving behind the intact lesion on the nicked DNA. In Xanthomonas oryzae pv. oryzae (strain PXO99A), this protein is Endonuclease V.